Here is a 120-residue protein sequence, read N- to C-terminus: Insulin-like peptide 3 (120 aa).

An N-terminal signal peptide occupies residues 1–29 (MGIEMRCQDRRILLPSLLLLILMIGGVQA). Cystine bridges form between C34-C101, C46-C114, and C100-C105. Positions 51–89 (NAMTKRTLDPVNFNQIDGFEDRSLLERLLSDSSVQMLKT) are cleaved as a propeptide — connecting peptide.

This sequence belongs to the insulin family. Heterodimer of a B chain and an A chain linked by two disulfide bonds. As to expression, expressed at a high level in seven cells of each larval brain hemisphere that may correspond to neurosecretory cells.

It localises to the secreted. Functionally, possible ligand of InR/insulin-like receptor. This chain is Insulin-like peptide 3, found in Drosophila melanogaster (Fruit fly).